Reading from the N-terminus, the 195-residue chain is Shikimate kinase (195 aa).

21-26 (GTGKTS) is a binding site for ATP. A Mg(2+)-binding site is contributed by T25. Substrate is bound by residues D43, R67, and G89. The disordered stretch occupies residues 128–148 (REQRPSFSGKASTEISEETMR). An ATP-binding site is contributed by R131. A compositionally biased stretch (polar residues) spans 132-141 (PSFSGKASTE). Residue R158 participates in substrate binding.

The protein belongs to the shikimate kinase family. In terms of assembly, monomer. Mg(2+) serves as cofactor.

Its subcellular location is the cytoplasm. It catalyses the reaction shikimate + ATP = 3-phosphoshikimate + ADP + H(+). The protein operates within metabolic intermediate biosynthesis; chorismate biosynthesis; chorismate from D-erythrose 4-phosphate and phosphoenolpyruvate: step 5/7. Functionally, catalyzes the specific phosphorylation of the 3-hydroxyl group of shikimic acid using ATP as a cosubstrate. In Syntrophus aciditrophicus (strain SB), this protein is Shikimate kinase.